Reading from the N-terminus, the 259-residue chain is Small ribosomal subunit protein mS23 (259 aa).

Over residues 230–244 the composition is skewed to polar residues; sequence RAASFTGSALPSSEE. Residues 230-259 are disordered; the sequence is RAASFTGSALPSSEESAPVDEETEKVPQQV.

It belongs to the mitochondrion-specific ribosomal protein mS23 family. Component of the mitochondrial small ribosomal subunit.

It is found in the mitochondrion. The protein is Small ribosomal subunit protein mS23 (rsm25) of Aspergillus terreus (strain NIH 2624 / FGSC A1156).